The sequence spans 346 residues: Glucose-6-phosphatase 3 (346 aa).

Residues M1–N24 are Lumenal-facing. The chain crosses the membrane as a helical span at residues M25 to A45. At A46–S56 the chain is on the cytoplasmic side. A helical membrane pass occupies residues V57 to G77. The Lumenal portion of the chain corresponds to D78–P108. Residue R79 participates in substrate binding. The helical transmembrane segment at G109–I129 threads the bilayer. H114 serves as the catalytic Proton donor. The Cytoplasmic portion of the chain corresponds to S130–R138. The helical transmembrane segment at S139–L159 threads the bilayer. The Lumenal portion of the chain corresponds to S160–H167. R161 lines the substrate pocket. H167 functions as the Nucleophile in the catalytic mechanism. The chain crosses the membrane as a helical span at residues F168 to M186. Topologically, residues S187–S197 are cytoplasmic. The helical transmembrane segment at F198 to F218 threads the bilayer. Residues T219–D254 lie on the Lumenal side of the membrane. Residues S255–I273 form a helical membrane-spanning segment. The Cytoplasmic segment spans residues R274–K283. Residues I284–P304 form a helical membrane-spanning segment. Residues Q305–S307 lie on the Lumenal side of the membrane. Residues L308–V328 traverse the membrane as a helical segment. The Cytoplasmic portion of the chain corresponds to P329 to S346.

Belongs to the glucose-6-phosphatase family. As to expression, widely expressed. Highly expressed in heart and testis and to a lower extent in spleen, stomach, small intestine, skeletal muscle and uterus. Expressed in muscle, brain, thymus, lung, kidney, spleen and pancreas (at protein level). In the brain, expressed in astrocytes (at protein level).

Its subcellular location is the endoplasmic reticulum membrane. It carries out the reaction D-glucose 6-phosphate + H2O = D-glucose + phosphate. It participates in carbohydrate biosynthesis; gluconeogenesis. Inhibited by vanadate. Functionally, hydrolyzes glucose-6-phosphate to glucose in the endoplasmic reticulum. May form with the glucose-6-phosphate transporter (SLC37A4/G6PT) a ubiquitously expressed complex responsible for glucose production through glycogenolysis and gluconeogenesis. Probably required for normal neutrophil function. The sequence is that of Glucose-6-phosphatase 3 (G6pc3) from Mus musculus (Mouse).